The primary structure comprises 325 residues: Tetraacyldisaccharide 4'-kinase (325 aa).

58-65 (TVGGSGKT) contributes to the ATP binding site.

This sequence belongs to the LpxK family.

The catalysed reaction is a lipid A disaccharide + ATP = a lipid IVA + ADP + H(+). It functions in the pathway glycolipid biosynthesis; lipid IV(A) biosynthesis; lipid IV(A) from (3R)-3-hydroxytetradecanoyl-[acyl-carrier-protein] and UDP-N-acetyl-alpha-D-glucosamine: step 6/6. Transfers the gamma-phosphate of ATP to the 4'-position of a tetraacyldisaccharide 1-phosphate intermediate (termed DS-1-P) to form tetraacyldisaccharide 1,4'-bis-phosphate (lipid IVA). In Coxiella burnetii (strain CbuG_Q212) (Coxiella burnetii (strain Q212)), this protein is Tetraacyldisaccharide 4'-kinase.